Here is a 157-residue protein sequence, read N- to C-terminus: Protein TIFY 8 (157 aa).

The 36-residue stretch at 33-68 folds into the Tify domain; it reads VPGTTEQLTIFYSGSMVKFDNVPREKIRYACRLRRL. A disordered region spans residues 126-147; that stretch reads SIGAQRTGTPPSRRRIHARGKS. A compositionally biased stretch (basic residues) spans 137–147; that stretch reads SRRRIHARGKS.

This sequence belongs to the TIFY/JAZ family. Ubiquitinated. Targeted for degradation by the SCF(COI1) E3 ubiquitin ligase-proteasome pathway during jasmonate signaling.

Its function is as follows. Repressor of jasmonate responses. The sequence is that of Protein TIFY 8 from Oryza sativa subsp. japonica (Rice).